The primary structure comprises 400 residues: Argininosuccinate synthase (400 aa).

Residues 11–19 (AYSGGLDTS) and Ala-38 contribute to the ATP site. Residues Tyr-89 and Ser-94 each coordinate L-citrulline. Gly-119 contributes to the ATP binding site. Positions 121, 125, and 126 each coordinate L-aspartate. Asn-125 provides a ligand contact to L-citrulline. The L-citrulline site is built by Arg-129, Ser-179, Ser-188, Glu-264, and Tyr-276.

The protein belongs to the argininosuccinate synthase family. Type 1 subfamily. As to quaternary structure, homotetramer.

It localises to the cytoplasm. It carries out the reaction L-citrulline + L-aspartate + ATP = 2-(N(omega)-L-arginino)succinate + AMP + diphosphate + H(+). The protein operates within amino-acid biosynthesis; L-arginine biosynthesis; L-arginine from L-ornithine and carbamoyl phosphate: step 2/3. This is Argininosuccinate synthase from Oleidesulfovibrio alaskensis (strain ATCC BAA-1058 / DSM 17464 / G20) (Desulfovibrio alaskensis).